Here is a 251-residue protein sequence, read N- to C-terminus: MDFTDQALVLRVGRFREADLWVRFLCRQRGIISAFAFGGCRSRRRFCGCLDIFNVVLMRVQGTRGGLYQSLQEATLLKGPDRLRRDWRRYGVAVNCLRFIEALGAGPDGADSAFTLTLEMLELLETVDVVPPLLPLLFRARFAFEQGYAPRFESCASCGEPFDGTAKDGGARFHVRDGVLYCGRCSAPTGATVAISRETLDALRFVQDNSPLRWSELCFSPTGRRECSRAVDGFIQYHIGLTWENGTFRRL.

This sequence belongs to the RecO family.

In terms of biological role, involved in DNA repair and RecF pathway recombination. The protein is DNA repair protein RecO of Nitratidesulfovibrio vulgaris (strain ATCC 29579 / DSM 644 / CCUG 34227 / NCIMB 8303 / VKM B-1760 / Hildenborough) (Desulfovibrio vulgaris).